The sequence spans 352 residues: S-adenosylmethionine:tRNA ribosyltransferase-isomerase (352 aa).

Belongs to the QueA family. In terms of assembly, monomer.

It localises to the cytoplasm. The catalysed reaction is 7-aminomethyl-7-carbaguanosine(34) in tRNA + S-adenosyl-L-methionine = epoxyqueuosine(34) in tRNA + adenine + L-methionine + 2 H(+). It participates in tRNA modification; tRNA-queuosine biosynthesis. In terms of biological role, transfers and isomerizes the ribose moiety from AdoMet to the 7-aminomethyl group of 7-deazaguanine (preQ1-tRNA) to give epoxyqueuosine (oQ-tRNA). In Solibacter usitatus (strain Ellin6076), this protein is S-adenosylmethionine:tRNA ribosyltransferase-isomerase.